The following is a 1222-amino-acid chain: MLFNINEKGEPLVISFAPFLSPEAIKHLQENERCSDQSQKRTAQQIEAIYTSGQNILVSASAGSGKTFVMVERILDKILRGVSIDRLFISTFTVKAATELRERIENKLYSQIAQTTDFQMKVYLTEQLQSLCQADIGTMDAFAQKVVSRYGYSIGISSQFRIMQDKAEQDVLKQEVFSKLFNEFMNQKEAPVFRALVKNFSGNCKDTSAFRELVYTCYSFSQSTENPKIWLQENFLSAAKTYQRLEDIPDHDIELLLLAMQDTANQLRDVTDMEDYGQLTKAGSRSAKYTKHLTIIEKLSDWVRDFKCLYGKAGLDRLIRDVTGLIPSGNDVTVSKVKYPVFKTLHQKLKQFRHLETILMYQKDCFPLLEQLQDFVLAFSEAYLAVKIQESAFEFSDIAHFAIKILEENTDIRQSYQQHYHEVMVDEYQDNNHMQERLLTLLSNGHNRFMVGDIKQSIYRFRQADPQIFNQKFRDYQKKPEQGKVILLKENFRSQSEVLNVSNAVFSHLMDESVGDALYDEQHQLIAGSHAQTVPYLDRRAQLLLYNSDKDDGNAPSDSEGISFSEVTIVAKEIIKLHNDKGVPFEDITLLVSSRTRNDIISHTFNQYGIPIVTDGGQQNYLKSVEVMVMLDTLRTINNPRNDYALVALLRSPMFAFDEDDLARIALQKDNELDKDCLYDKIQRAVIGRGAHPELIHDTLLGKLNIFLKTLKSWRRYAKLGSLYDLIWKIFNDRFYFDFVASQAKAEQAQANLYALALRANQFEKSGYKGLYRFIKMIDKVLETQNDLADVEVAAPKQAVNLMTIHKSKGLQFPYVFILNCDKRFSMTDIHKSFILNRQHGIGIKYLADIKGLLGETTLNSVKVSMETLPYQLNKQELRLATLSEQMRLLYVAMTRAEKKVYFIGKASKSKSQDITDPKKLGKLLPLALREQLLTFQDWLLAIADIFSTEDLYFDVRFIEDSDLTQESVGRLQTPQLLNPDDLKDNRQSETIARALDMLEAVSQLNANYEAAIHLPTVRTPSQLKATYEPLLEPIGVDIIEKSSRSLSDFTLPHFSKKAKVEVSHIGSALHQLMQVLPLSKPINQQTLLDALRGIASNEEVKTALDLKKIESFFCDTSLGQFFQTYQKHLYREAPFAILKLDPISQEEYVLRGIIDAYFLFDDHIVLVDYKTDKYKQPIELKKRYQQQLELYAEALTQTYKLPVTKRYLVLMGGGNPEIVEV.

One can recognise a UvrD-like helicase ATP-binding domain in the interval 39–495 (QKRTAQQIEA…ILLKENFRSQ (457 aa)). 60–67 (ASAGSGKT) is an ATP binding site. Residues 524-810 (QLIAGSHAQT…NLMTIHKSKG (287 aa)) form the UvrD-like helicase C-terminal domain.

The protein belongs to the helicase family. AddA subfamily. As to quaternary structure, heterodimer of AddA and AddB/RexB. Requires Mg(2+) as cofactor.

It carries out the reaction Couples ATP hydrolysis with the unwinding of duplex DNA by translocating in the 3'-5' direction.. The catalysed reaction is ATP + H2O = ADP + phosphate + H(+). Its function is as follows. The heterodimer acts as both an ATP-dependent DNA helicase and an ATP-dependent, dual-direction single-stranded exonuclease. Recognizes the chi site generating a DNA molecule suitable for the initiation of homologous recombination. The AddA nuclease domain is required for chi fragment generation; this subunit has the helicase and 3' -&gt; 5' nuclease activities. In Streptococcus pyogenes serotype M2 (strain MGAS10270), this protein is ATP-dependent helicase/nuclease subunit A.